We begin with the raw amino-acid sequence, 457 residues long: Ribulose bisphosphate carboxylase-like protein (457 aa).

Residues lysine 199, aspartate 201, and glutamate 202 each coordinate Mg(2+). Lysine 199 bears the N6-carboxylysine mark. Residues 426–457 (AIAAFGKPAHGQAASPQPSEQASEPDAAGGDS) form a disordered region.

This sequence belongs to the RuBisCO large chain family. Type IV subfamily. Mg(2+) is required as a cofactor.

In terms of biological role, may be involved in sulfur metabolism and oxidative stress response. Does not show RuBisCO activity. In Allochromatium vinosum (strain ATCC 17899 / DSM 180 / NBRC 103801 / NCIMB 10441 / D) (Chromatium vinosum), this protein is Ribulose bisphosphate carboxylase-like protein.